We begin with the raw amino-acid sequence, 244 residues long: 3-oxoacyl-[acyl-carrier-protein] reductase FabG (244 aa).

NADP(+)-binding positions include 12 to 15 and threonine 37; that span reads GANQ. Residues glutamate 50 and glycine 53 each coordinate Ca(2+). NADP(+) contacts are provided by residues 59 to 60 and asparagine 86; that span reads NL. Substrate is bound at residue serine 138. A Ca(2+)-binding site is contributed by asparagine 145. Tyrosine 151 functions as the Proton acceptor in the catalytic mechanism. NADP(+)-binding positions include 151–155 and isoleucine 184; that span reads YSASK. Position 234 (threonine 234) interacts with Ca(2+).

The protein belongs to the short-chain dehydrogenases/reductases (SDR) family. In terms of assembly, homotetramer.

It carries out the reaction a (3R)-hydroxyacyl-[ACP] + NADP(+) = a 3-oxoacyl-[ACP] + NADPH + H(+). It functions in the pathway lipid metabolism; fatty acid biosynthesis. Catalyzes the NADPH-dependent reduction of beta-ketoacyl-ACP substrates to beta-hydroxyacyl-ACP products, the first reductive step in the elongation cycle of fatty acid biosynthesis. The protein is 3-oxoacyl-[acyl-carrier-protein] reductase FabG (fabG) of Buchnera aphidicola subsp. Acyrthosiphon pisum (strain APS) (Acyrthosiphon pisum symbiotic bacterium).